Here is a 519-residue protein sequence, read N- to C-terminus: Steroid 17-alpha-hydroxylase/17,20 lyase (519 aa).

A heme-binding site is contributed by Cys455.

It belongs to the cytochrome P450 family. Heme is required as a cofactor.

The protein resides in the membrane. The enzyme catalyses a C21-steroid + reduced [NADPH--hemoprotein reductase] + O2 = a 17alpha-hydroxy-C21-steroid + oxidized [NADPH--hemoprotein reductase] + H2O + H(+). It carries out the reaction 17alpha-hydroxyprogesterone + reduced [NADPH--hemoprotein reductase] + O2 = androst-4-ene-3,17-dione + acetate + oxidized [NADPH--hemoprotein reductase] + H2O + 2 H(+). The catalysed reaction is 17alpha-hydroxypregnenolone + reduced [NADPH--hemoprotein reductase] + O2 = 3beta-hydroxyandrost-5-en-17-one + acetate + oxidized [NADPH--hemoprotein reductase] + H2O + 2 H(+). Its pathway is lipid metabolism; steroid biosynthesis. Functionally, conversion of pregnenolone and progesterone to their 17-alpha-hydroxylated products and subsequently to dehydroepiandrosterone (DHEA) and androstenedione. Catalyzes both the 17-alpha-hydroxylation and the 17,20-lyase reaction. The protein is Steroid 17-alpha-hydroxylase/17,20 lyase (CYP17A1) of Rana dybowskii (Dybovsky's frog).